We begin with the raw amino-acid sequence, 327 residues long: Thiamine-binding periplasmic protein (327 aa).

The N-terminal stretch at 1 to 18 is a signal peptide; sequence MLKKCLPLLLLCTAPVFA. Thiamine contacts are provided by residues 59 to 60, 161 to 162, W197, and 215 to 218; these read DG, ST, and YTTS.

Belongs to the bacterial solute-binding protein 1 family. Monomer in solution. The complex is composed of two ATP-binding proteins (ThiQ), two transmembrane proteins (ThiP) and a solute-binding protein (ThiB).

It is found in the periplasm. With respect to regulation, transport is inhibited by the sulfhydryl-specific modifier N-ethylmaleimide. Functionally, part of the ABC transporter complex ThiBPQ involved in thiamine import. Binds thiamine, thiamine phosphate and thiamine diphosphate with high affinity. This is Thiamine-binding periplasmic protein (thiB) from Escherichia coli (strain K12).